The following is a 113-amino-acid chain: MAAIPSSGSLVATHDYYRRRLGSTSSNSSCGSVDYSGEVIPHHPGLPKSDPGHWWASFFFGKPTHPVMTTVSESPENSGSFRITSGLVPCGLVQESVLKQKVGDTKSDSSPSA.

Belongs to the PPDPF family.

Functionally, probable regulator of exocrine pancreas development. This is Pancreatic progenitor cell differentiation and proliferation factor B (ppdpf-b) from Xenopus laevis (African clawed frog).